A 286-amino-acid chain; its full sequence is UDP-3-O-acyl-N-acetylglucosamine deacetylase (286 aa).

Zn(2+) is bound by residues His81, His240, and Asp244. His266 functions as the Proton donor in the catalytic mechanism.

The protein belongs to the LpxC family. Zn(2+) serves as cofactor.

The catalysed reaction is a UDP-3-O-[(3R)-3-hydroxyacyl]-N-acetyl-alpha-D-glucosamine + H2O = a UDP-3-O-[(3R)-3-hydroxyacyl]-alpha-D-glucosamine + acetate. The protein operates within glycolipid biosynthesis; lipid IV(A) biosynthesis; lipid IV(A) from (3R)-3-hydroxytetradecanoyl-[acyl-carrier-protein] and UDP-N-acetyl-alpha-D-glucosamine: step 2/6. Its function is as follows. Catalyzes the hydrolysis of UDP-3-O-myristoyl-N-acetylglucosamine to form UDP-3-O-myristoylglucosamine and acetate, the committed step in lipid A biosynthesis. The sequence is that of UDP-3-O-acyl-N-acetylglucosamine deacetylase from Francisella tularensis subsp. tularensis (strain FSC 198).